Here is a 274-residue protein sequence, read N- to C-terminus: Ciliary microtubule inner protein 2B (274 aa).

Disordered stretches follow at residues 46–89 and 119–171; these read SPGL…SSMV and TQRN…MDDR. Positions 130 to 155 are enriched in basic and acidic residues; the sequence is LPKEAKGEKDVEKDQEPKPEVEKEPE.

It belongs to the CIMIP2 family. As to quaternary structure, microtubule inner protein component of sperm flagellar doublet microtubules. Expressed in trachea multiciliated cells.

Its subcellular location is the cytoplasm. It is found in the cytoskeleton. It localises to the cilium axoneme. The protein resides in the flagellum axoneme. Functionally, microtubule inner protein (MIP) part of the dynein-decorated doublet microtubules (DMTs) in cilia axoneme, which is required for motile cilia beating. The sequence is that of Ciliary microtubule inner protein 2B (CIMIP2B) from Bos taurus (Bovine).